The chain runs to 275 residues: uncharacterized protein (275 aa).

NAD(+) is bound by residues 20–22, 41–42, 80–81, and Asn107; these read RAQ and DI. Ser160 contacts substrate. The Proton acceptor role is filled by Tyr173. NAD(+) is bound by residues Lys177 and 206 to 208; that span reads VDT.

The protein belongs to the short-chain dehydrogenases/reductases (SDR) family.

This is an uncharacterized protein from Mycobacterium tuberculosis (strain CDC 1551 / Oshkosh).